The primary structure comprises 148 residues: Holo-[acyl-carrier-protein] synthase (148 aa).

Positions 8 and 57 each coordinate Mg(2+).

The protein belongs to the P-Pant transferase superfamily. AcpS family. It depends on Mg(2+) as a cofactor.

The protein resides in the cytoplasm. The enzyme catalyses apo-[ACP] + CoA = holo-[ACP] + adenosine 3',5'-bisphosphate + H(+). Functionally, transfers the 4'-phosphopantetheine moiety from coenzyme A to a Ser of acyl-carrier-protein. This is Holo-[acyl-carrier-protein] synthase from Ruegeria pomeroyi (strain ATCC 700808 / DSM 15171 / DSS-3) (Silicibacter pomeroyi).